The chain runs to 256 residues: Cytoplasmic envelopment protein 1 (256 aa).

Belongs to the herpesviridae cytoplasmic envelopment protein 1 family.

It localises to the virion. The protein resides in the virion tegument. Its subcellular location is the host cytoplasm. The protein localises to the host Golgi apparatus. Its function is as follows. Plays a critical role in cytoplasmic virus egress. Participates in the final step of tegumentation and envelope acquisition within the host cytoplasm. This chain is Cytoplasmic envelopment protein 1 (U75), found in Homo sapiens (Human).